Reading from the N-terminus, the 759-residue chain is Protein MEI2-like 3 (759 aa).

RRM domains are found at residues 166–239 (RTLF…FSIP) and 251–324 (GTLV…HSRP).

Probable RNA-binding protein that plays a role in meiosis and vegetative growth. This is Protein MEI2-like 3 (ML3) from Arabidopsis thaliana (Mouse-ear cress).